The sequence spans 374 residues: UPF0754 membrane protein SA1664 (374 aa).

The next 2 membrane-spanning stretches (helical) occupy residues 4–24 (LFII…TNVI) and 354–374 (SLGF…AIFV).

Belongs to the UPF0754 family.

It localises to the cell membrane. This chain is UPF0754 membrane protein SA1664, found in Staphylococcus aureus (strain N315).